Reading from the N-terminus, the 344-residue chain is Putative transport protein sll0060 (344 aa).

8 consecutive transmembrane segments (helical) span residues 14 to 34 (LWIG…LQIL), 41 to 61 (LRIF…VRWL), 72 to 92 (AVAL…LLVI), 155 to 175 (LINL…IFIM), 215 to 235 (IGQA…LSIF), 237 to 257 (VPLA…PFGG), 262 to 282 (VLIS…VLAI), and 310 to 330 (ILLS…LVAI).

Belongs to the autoinducer-2 exporter (AI-2E) (TC 2.A.86) family.

It is found in the cell membrane. This chain is Putative transport protein sll0060, found in Synechocystis sp. (strain ATCC 27184 / PCC 6803 / Kazusa).